We begin with the raw amino-acid sequence, 429 residues long: Adenylosuccinate synthetase (429 aa).

Residues glycine 12–lysine 18 and glycine 40–threonine 42 each bind GTP. Residue aspartate 13 is the Proton acceptor of the active site. Mg(2+) is bound by residues aspartate 13 and glycine 40. Residues aspartate 13 to lysine 16, asparagine 38 to histidine 41, threonine 128, arginine 142, glutamine 223, and arginine 302 each bind IMP. Residue histidine 41 is the Proton donor of the active site. Threonine 298–arginine 304 is a substrate binding site. Residues arginine 304, leucine 330 to aspartate 332, and serine 412 to glycine 414 each bind GTP.

Belongs to the adenylosuccinate synthetase family. As to quaternary structure, homodimer. Mg(2+) is required as a cofactor.

Its subcellular location is the cytoplasm. The enzyme catalyses IMP + L-aspartate + GTP = N(6)-(1,2-dicarboxyethyl)-AMP + GDP + phosphate + 2 H(+). The protein operates within purine metabolism; AMP biosynthesis via de novo pathway; AMP from IMP: step 1/2. Functionally, plays an important role in the de novo pathway of purine nucleotide biosynthesis. Catalyzes the first committed step in the biosynthesis of AMP from IMP. This is Adenylosuccinate synthetase from Lactobacillus delbrueckii subsp. bulgaricus (strain ATCC 11842 / DSM 20081 / BCRC 10696 / JCM 1002 / NBRC 13953 / NCIMB 11778 / NCTC 12712 / WDCM 00102 / Lb 14).